A 476-amino-acid chain; its full sequence is Serine/threonine-protein kinase PknF (476 aa).

The 268-residue stretch at 12–279 folds into the Protein kinase domain; it reads FTIVRQLGSG…FARALGHRLG (268 aa). ATP contacts are provided by residues 18-26 and Lys41; that span reads LGSGGMGEV. The Proton acceptor role is filled by Asp137. Residues 306–326 form a helical membrane-spanning segment; sequence TAVIVPAVLAMLLVMAVAVAV. Positions 332 to 376 are disordered; that stretch reads ADDERAAQPARTRTTTSAGTTTSVAPASTTRPAPTTPTTTGAADT. Positions 338–376 are enriched in low complexity; sequence AQPARTRTTTSAGTTTSVAPASTTRPAPTTPTTTGAADT.

It belongs to the protein kinase superfamily. Ser/Thr protein kinase family. Post-translationally, autophosphorylated. Dephosphorylated by PstP.

It is found in the cell membrane. It catalyses the reaction L-seryl-[protein] + ATP = O-phospho-L-seryl-[protein] + ADP + H(+). The catalysed reaction is L-threonyl-[protein] + ATP = O-phospho-L-threonyl-[protein] + ADP + H(+). Functionally, a serine/threonine-protein kinase, acts on HupB in vitro. This is Serine/threonine-protein kinase PknF from Mycobacterium tuberculosis (strain ATCC 25177 / H37Ra).